Reading from the N-terminus, the 69-residue chain is Chondroitin proteoglycan 9 (69 aa).

Residues 1–19 form the signal peptide; that stretch reads MHLWQLVLLVILFFGAAFG. O-linked (Xyl...) (chondroitin sulfate) serine glycans are attached at residues Ser25 and Ser27.

This is Chondroitin proteoglycan 9 from Caenorhabditis elegans.